Here is a 247-residue protein sequence, read N- to C-terminus: Thioredoxin reductase-like selenoprotein T homolog selt-1.1 (247 aa).

Positions methionine 1–alanine 26 are cleaved as a signal peptide. Residues cysteine 92 and cysteine 95 are joined by a disulfide bond.

This sequence belongs to the SelWTH family. SELT subfamily. In terms of tissue distribution, broadly expressed in neurons of nervous system including ADL, ASH, ASI, ASJ, ASK and AWB amphid sensilla neurons, in epithelial cells including hypodermal, arcade, pharyngeal, vulval and rectal cells, and in somatic muscle cells of the head, neck and body wall, and non-striated pharyngeal muscles.

It localises to the endoplasmic reticulum. The enzyme catalyses [thioredoxin]-dithiol + NADP(+) = [thioredoxin]-disulfide + NADPH + H(+). Functionally, probably has thioredoxin reductase-like oxidoreductase activity. Plays a role in regulating the oxidative stress response, and odorant and pathogenic bacteria avoidance behavior. The sequence is that of Thioredoxin reductase-like selenoprotein T homolog selt-1.1 from Caenorhabditis elegans.